We begin with the raw amino-acid sequence, 471 residues long: Glutamate--tRNA ligase (471 aa).

Residues 10–20 carry the 'HIGH' region motif; it reads PSPTGYLHIGG. Zn(2+)-binding residues include cysteine 107, cysteine 109, cysteine 134, and glutamate 136. Residues 244–248 carry the 'KMSKS' region motif; that stretch reads RLSKR. Lysine 247 contributes to the ATP binding site.

This sequence belongs to the class-I aminoacyl-tRNA synthetase family. Glutamate--tRNA ligase type 1 subfamily. In terms of assembly, monomer. Zn(2+) serves as cofactor.

The protein localises to the cytoplasm. The enzyme catalyses tRNA(Glu) + L-glutamate + ATP = L-glutamyl-tRNA(Glu) + AMP + diphosphate. In terms of biological role, catalyzes the attachment of glutamate to tRNA(Glu) in a two-step reaction: glutamate is first activated by ATP to form Glu-AMP and then transferred to the acceptor end of tRNA(Glu). The sequence is that of Glutamate--tRNA ligase from Anaeromyxobacter sp. (strain Fw109-5).